A 109-amino-acid chain; its full sequence is Protein TAR1 (109 aa).

The disordered stretch occupies residues 62 to 109 (HFTNNWDPRHTGFSPSMTSCSKEHRQGPATKLPSSNYNSDVEDARFQI).

The protein resides in the mitochondrion. In terms of biological role, may be involved in mtDNA stability or mitochondrial gene expression regulation at the post-transcriptional level. This chain is Protein TAR1 (TAR1-A), found in Kluyveromyces lactis (strain ATCC 8585 / CBS 2359 / DSM 70799 / NBRC 1267 / NRRL Y-1140 / WM37) (Yeast).